The sequence spans 268 residues: Phosphatidylglycerol--prolipoprotein diacylglyceryl transferase (268 aa).

A run of 3 helical transmembrane segments spans residues 25 to 45, 57 to 77, and 93 to 113; these read WYGV…TKVF, YLFY…HCFF, and VWHG…AVYF. An a 1,2-diacyl-sn-glycero-3-phospho-(1'-sn-glycerol)-binding site is contributed by Arg-142. 4 consecutive transmembrane segments (helical) span residues 151 to 171, 175 to 195, 204 to 224, and 236 to 256; these read IIGI…DLLP, VQLY…LAYW, GLLL…LEFF, and PLSV…LLIF.

This sequence belongs to the Lgt family.

Its subcellular location is the cell inner membrane. It carries out the reaction L-cysteinyl-[prolipoprotein] + a 1,2-diacyl-sn-glycero-3-phospho-(1'-sn-glycerol) = an S-1,2-diacyl-sn-glyceryl-L-cysteinyl-[prolipoprotein] + sn-glycerol 1-phosphate + H(+). It participates in protein modification; lipoprotein biosynthesis (diacylglyceryl transfer). Catalyzes the transfer of the diacylglyceryl group from phosphatidylglycerol to the sulfhydryl group of the N-terminal cysteine of a prolipoprotein, the first step in the formation of mature lipoproteins. This is Phosphatidylglycerol--prolipoprotein diacylglyceryl transferase from Chloroherpeton thalassium (strain ATCC 35110 / GB-78).